Here is a 142-residue protein sequence, read N- to C-terminus: Large ribosomal subunit protein uL13 (142 aa).

This sequence belongs to the universal ribosomal protein uL13 family. As to quaternary structure, part of the 50S ribosomal subunit.

In terms of biological role, this protein is one of the early assembly proteins of the 50S ribosomal subunit, although it is not seen to bind rRNA by itself. It is important during the early stages of 50S assembly. This chain is Large ribosomal subunit protein uL13, found in Erwinia tasmaniensis (strain DSM 17950 / CFBP 7177 / CIP 109463 / NCPPB 4357 / Et1/99).